The following is a 494-amino-acid chain: Splicing regulatory glutamine/lysine-rich protein 1 (494 aa).

The RRM domain occupies 69 to 145 (RTVYVGNLNS…RPLKINHSNN (77 aa)). 2 positions are modified to phosphoserine: S174 and S187. Residues 176–494 (ISAAIEPESG…ESPCSKADAV (319 aa)) are disordered. Positions 183–192 (ESGKSNERKG) are enriched in basic and acidic residues. Residues 193–262 (GRSRSHTRSK…KSRSRSRSRD (70 aa)) are compositionally biased toward basic residues. Residues 263 to 340 (KRKDTREKVK…DRSKETDEKR (78 aa)) are compositionally biased toward basic and acidic residues. Phosphothreonine is present on T348. The span at 357–373 (RRSRSTSRERRRRRSRS) shows a compositional bias: basic residues. The segment covering 404–474 (REKERDHISD…SPRTEDEGKV (71 aa)) has biased composition (basic and acidic residues). The segment covering 476–486 (HNGNCQPNEES) has biased composition (polar residues). A Glycyl lysine isopeptide (Lys-Gly) (interchain with G-Cter in SUMO2) cross-link involves residue K490.

This sequence belongs to the splicing factor SR family. As to quaternary structure, homodimer. Binds SFRS1, SFRS2, SFRS3 and SFRS6. Interacts with the spliceosome. Interacts with SREK1IP1.

It localises to the nucleus. Participates in the regulation of alternative splicing by modulating the activity of other splice facors. Inhibits the splicing activity of SFRS1, SFRS2 and SFRS6. Augments the splicing activity of SFRS3. The chain is Splicing regulatory glutamine/lysine-rich protein 1 (Srek1) from Mus musculus (Mouse).